A 121-amino-acid chain; its full sequence is Large ribosomal subunit protein bL12 (121 aa).

Belongs to the bacterial ribosomal protein bL12 family. In terms of assembly, homodimer. Part of the ribosomal stalk of the 50S ribosomal subunit. Forms a multimeric L10(L12)X complex, where L10 forms an elongated spine to which 2 to 4 L12 dimers bind in a sequential fashion. Binds GTP-bound translation factors.

Its function is as follows. Forms part of the ribosomal stalk which helps the ribosome interact with GTP-bound translation factors. Is thus essential for accurate translation. This is Large ribosomal subunit protein bL12 from Erwinia tasmaniensis (strain DSM 17950 / CFBP 7177 / CIP 109463 / NCPPB 4357 / Et1/99).